A 206-amino-acid polypeptide reads, in one-letter code: MTHRRAHIYRETSESTVDVAIDLDGAGESTISTGVGFYDHMLTTLSKHSGIDMTITTTGDVEIDGHHSIEDTAIALGQALAQALGDKCGITRFGDAVVPLDEALAQCVVDVAGRPWVACSGEPEGQAYVRIGGSGVSYQGSMTYHVMHSLAFNAGLCVHLRLLAGRDPHHICEAEFKALARALRIAIAPDPRNAGRVPSTKGALNV.

It belongs to the imidazoleglycerol-phosphate dehydratase family.

The protein resides in the cytoplasm. The catalysed reaction is D-erythro-1-(imidazol-4-yl)glycerol 3-phosphate = 3-(imidazol-4-yl)-2-oxopropyl phosphate + H2O. It participates in amino-acid biosynthesis; L-histidine biosynthesis; L-histidine from 5-phospho-alpha-D-ribose 1-diphosphate: step 6/9. The protein is Imidazoleglycerol-phosphate dehydratase of Cutibacterium acnes (strain DSM 16379 / KPA171202) (Propionibacterium acnes).